Reading from the N-terminus, the 477-residue chain is Glycogen synthase (477 aa).

Residue K15 coordinates ADP-alpha-D-glucose.

This sequence belongs to the glycosyltransferase 1 family. Bacterial/plant glycogen synthase subfamily.

It catalyses the reaction [(1-&gt;4)-alpha-D-glucosyl](n) + ADP-alpha-D-glucose = [(1-&gt;4)-alpha-D-glucosyl](n+1) + ADP + H(+). Its pathway is glycan biosynthesis; glycogen biosynthesis. In terms of biological role, synthesizes alpha-1,4-glucan chains using ADP-glucose. The chain is Glycogen synthase from Shigella dysenteriae serotype 1 (strain Sd197).